Here is a 1512-residue protein sequence, read N- to C-terminus: DNA polymerase (1512 aa).

The protein belongs to the DNA polymerase type-B family.

Its subcellular location is the host nucleus. The enzyme catalyses DNA(n) + a 2'-deoxyribonucleoside 5'-triphosphate = DNA(n+1) + diphosphate. This Ictalurid herpesvirus 1 (strain Auburn) (IcHV-1) protein is DNA polymerase (57/58).